A 107-amino-acid chain; its full sequence is Flagellar transcriptional regulator FlhD (107 aa).

The protein belongs to the FlhD family. In terms of assembly, homodimer; disulfide-linked. Forms a heterohexamer composed of two FlhC and four FlhD subunits. Each FlhC binds a FlhD dimer, forming a heterotrimer, and a hexamer assembles by dimerization of two heterotrimers.

The protein localises to the cytoplasm. Functions in complex with FlhC as a master transcriptional regulator that regulates transcription of several flagellar and non-flagellar operons by binding to their promoter region. Activates expression of class 2 flagellar genes, including fliA, which is a flagellum-specific sigma factor that turns on the class 3 genes. Also regulates genes whose products function in a variety of physiological pathways. This chain is Flagellar transcriptional regulator FlhD, found in Bordetella bronchiseptica (strain ATCC BAA-588 / NCTC 13252 / RB50) (Alcaligenes bronchisepticus).